Consider the following 440-residue polypeptide: MQKTITPLSPTEQELEIILSAEEFGPEYNKELDEAKRTVHIKGFRKGHAPMGLLKKLAGPSIEIAVAEKLGGKYFTDIITAENIKPANRAQIADFAFTDDTLTLKLVYEIHPEFELQDFSGYTFTKANYVVGDKEVEREIELILKSHGTMVTSDEPASEKDTVIGDALRFNDEGELDEASKVANHHFSMEYLPAENPFRIALLGKKAGDVVEVVNTPIKEDEEGEEATAEDAEAVKPTRFQVTVTEVKRLELPELDDELVKEISQERFDNVADFKADVRLQLEQHFTMKSDNDLLEAISGKMVEENPVPVPNSMVESFQDMLLENAKRQLSGNFPKGFDVTGFRASMRDNAEKHARWMLITQKVAEMNKLTVTDEDIVAFAEKEAGKNEALDIKQIIETYKSPDFHDYIADSIMKEKVYNAITEKVTVTEEETPVPEHRM.

Positions 160 to 253 (KDTVIGDALR…VTEVKRLELP (94 aa)) constitute a PPIase FKBP-type domain.

This sequence belongs to the FKBP-type PPIase family. Tig subfamily.

The protein resides in the cytoplasm. The enzyme catalyses [protein]-peptidylproline (omega=180) = [protein]-peptidylproline (omega=0). Involved in protein export. Acts as a chaperone by maintaining the newly synthesized protein in an open conformation. Functions as a peptidyl-prolyl cis-trans isomerase. This is Trigger factor from Chlorobium chlorochromatii (strain CaD3).